A 467-amino-acid polypeptide reads, in one-letter code: Cobyrinate a,c-diamide synthase (467 aa).

The 194-residue stretch at 256-449 folds into the GATase cobBQ-type domain; sequence RVGYAADQAF…AHIHVEGAPE (194 aa). Cys338 (nucleophile) is an active-site residue.

Belongs to the CobB/CbiA family. The cofactor is Mg(2+).

The enzyme catalyses cob(II)yrinate + 2 L-glutamine + 2 ATP + 2 H2O = cob(II)yrinate a,c diamide + 2 L-glutamate + 2 ADP + 2 phosphate + 2 H(+). It functions in the pathway cofactor biosynthesis; adenosylcobalamin biosynthesis; cob(II)yrinate a,c-diamide from sirohydrochlorin (anaerobic route): step 10/10. Catalyzes the ATP-dependent amidation of the two carboxylate groups at positions a and c of cobyrinate, using either L-glutamine or ammonia as the nitrogen source. The chain is Cobyrinate a,c-diamide synthase from Magnetococcus marinus (strain ATCC BAA-1437 / JCM 17883 / MC-1).